The sequence spans 774 residues: Cilium assembly protein DZIP1L (774 aa).

Residues 166-189 (HTCHLCDKTFMNATFLRGHIQRRH) form a C2H2-type zinc finger. Positions 204–450 (LGEVLEELRA…RKVLAALRKN (247 aa)) form a coiled coil. Disordered regions lie at residues 415 to 435 (MPKA…ASLE), 515 to 674 (NKEV…ASSG), and 686 to 774 (KQLE…IPGW). The span at 421–433 (TEEDSSEEELEAS) shows a compositional bias: acidic residues. Residues S425 and S426 each carry the phosphoserine modification. Residues 515 to 526 (NKEVSSRVKQRW) show a composition bias toward basic and acidic residues. The segment covering 597-616 (GPSSTPVSPGSGLSSTPPFS) has biased composition (low complexity).

It belongs to the DZIP C2H2-type zinc-finger protein family. In terms of assembly, interacts with SEPTIN2.

It localises to the cytoplasm. Its subcellular location is the cytoskeleton. The protein resides in the cilium basal body. It is found in the microtubule organizing center. The protein localises to the centrosome. It localises to the centriole. In terms of biological role, involved in primary cilium formation. Probably acts as a transition zone protein required for localization of PKD1/PC1 and PKD2/PC2 to the ciliary membrane. The protein is Cilium assembly protein DZIP1L of Mus musculus (Mouse).